The chain runs to 316 residues: Protein lifeguard 2 (316 aa).

Residues 1 to 49 (MTQGKLSVANKAPGTEGQQQANGEKKDAPAVPSAPPSYEEATSGEGLKA) form a disordered region. The next 3 membrane-spanning stretches (helical) occupy residues 106 to 126 (VYTI…LFTF), 138 to 158 (PGWY…LACC), and 165 to 185 (FPWN…LTGM). N-linked (GlcNAc...) asparagine glycosylation is present at asparagine 191. The next 4 helical transmembrane spans lie at 194 to 214 (SVLL…IFSF), 225 to 245 (GVLF…AILL), 251 to 271 (PWLH…FLAF), and 290 to 310 (IFGA…FLQL).

Belongs to the BI1 family. LFG subfamily. Interacts with FAS/TNFRSF6 and BAX. In terms of tissue distribution, expressed at high levels on dendrites and to a lesser extent on the soma and axons of neurons in various regions of brain.

It localises to the cell membrane. It is found in the membrane raft. The protein localises to the postsynaptic cell membrane. Functionally, antiapoptotic protein which protects cells uniquely from Fas-induced apoptosis. Regulates Fas-mediated apoptosis in neurons by interfering with caspase-8 activation. Plays a role in cerebellar development by affecting cerebellar size, internal granular layer (IGL) thickness, and Purkinje cell (PC) development. This Rattus norvegicus (Rat) protein is Protein lifeguard 2 (Faim2).